The primary structure comprises 545 residues: E3 ubiquitin-protein ligase ipaH9.8 (545 aa).

Positions 1–242 (MLPINNNFSL…YHGPRIYFSM (242 aa)) are interaction with target proteins. 8 LRR repeats span residues 57–77 (NSDE…NLPA), 78–99 (QITL…PVTL), 100–117 (KKLY…VLPP), 118–139 (ALES…PDSL), 140–157 (LTMN…SLPQ), 158–179 (ALKN…SEGN), 182–203 (VVRE…ILNL), and 205–228 (NECS…QRLT). Residues 243 to 250 (SDGQQNTL) form a linker region. The segment at 251–545 (HRPLADAVTA…SENGSQLHHS (295 aa)) is E3 ubiquitin-protein ligase catalytic domain. The region spanning 253-545 (PLADAVTAWF…SENGSQLHHS (293 aa)) is the NEL domain. Residue Cys337 is the Glycyl thioester intermediate of the active site.

The protein belongs to the LRR-containing bacterial E3 ligase family. As to quaternary structure, also interacts with human and mouse U2AF1 (U2AF35). Post-translationally, ubiquitinated in the presence of host E1 ubiquitin-activating enzyme, E2 ubiquitin-conjugating enzyme and ubiquitin.

The protein resides in the secreted. The protein localises to the host cytoplasm. Its subcellular location is the host nucleus. It carries out the reaction S-ubiquitinyl-[E2 ubiquitin-conjugating enzyme]-L-cysteine + [acceptor protein]-L-lysine = [E2 ubiquitin-conjugating enzyme]-L-cysteine + N(6)-ubiquitinyl-[acceptor protein]-L-lysine.. With respect to regulation, exists in an autoinhibited state in the absence of substrate protein, due to interactions of the leucine-rich repeats with NEL domain. Is activated upon binding to a substrate protein. Its function is as follows. Effector E3 ubiquitin ligase that interferes with host's ubiquitination pathway and modulates the acute inflammatory responses, thus facilitating bacterial colonization within the host cell. Interacts with IKBKG (NEMO) and TNIP1 (ABIN-1), a ubiquitin-binding adapter protein, which results in TNIP1-dependent 'Lys-27'-linked polyubiquitination of IKBKG. Consequently, polyubiquitinated IKBKG undergoes proteasome-dependent degradation, which perturbs NF-kappa-B activation during bacterial infection. Mediates polyubiquitination of host U2AF1, leading to its proteasomal degradation. Catalyzes 'Lys-48'-linked polyubiquitination and subsequent degradation of a subset of host guanylate-binding proteins (GBP1, GBP2, GBP4 and GBP6), thereby suppressing host cell defense. In contrast, host GBP3 and GBP7 are not ubiquitinated by IpaH9.8. Uses UBE2D2 (UBCH5B) as an E2 ubiquitin-conjugating enzyme. In Shigella flexneri serotype X (strain 2002017), this protein is E3 ubiquitin-protein ligase ipaH9.8 (ipaH9.8).